Here is a 311-residue protein sequence, read N- to C-terminus: Insulin-like growth factor-binding protein 2 (311 aa).

The signal sequence occupies residues methionine 1 to proline 36. The IGFBP N-terminal domain maps to valine 38 to proline 120. 6 disulfides stabilise this stretch: cysteine 42-cysteine 70, cysteine 45-cysteine 72, cysteine 53-cysteine 73, cysteine 61-cysteine 76, cysteine 84-cysteine 97, and cysteine 91-cysteine 117. Disordered stretches follow at residues glutamine 112–threonine 168 and glycine 188–threonine 210. Positions arginine 209–cysteine 291 constitute a Thyroglobulin type-1 domain. 3 disulfides stabilise this stretch: cysteine 212-cysteine 246, cysteine 257-cysteine 268, and cysteine 270-cysteine 291. The Cell attachment site motif lies at arginine 286 to aspartate 288.

Binds IGF2 more than IGF1.

Its subcellular location is the secreted. In terms of biological role, inhibits IGF-mediated growth and developmental rates. IGF-binding proteins prolong the half-life of the IGFs and have been shown to either inhibit or stimulate the growth promoting effects of the IGFs on cell culture. They alter the interaction of IGFs with their cell surface receptors. The sequence is that of Insulin-like growth factor-binding protein 2 (IGFBP2) from Gallus gallus (Chicken).